The primary structure comprises 168 residues: Photosystem I assembly protein Ycf3 (168 aa).

TPR repeat units follow at residues 35 to 68, 72 to 105, and 120 to 153; these read AFTY…EIDP, SYIL…NPFL, and GEQA…TPGN.

It belongs to the Ycf3 family. In terms of assembly, interacts with Y3IP1.

The protein resides in the plastid. The protein localises to the chloroplast thylakoid membrane. Essential for the assembly of the photosystem I (PSI) complex. May act as a chaperone-like factor to guide the assembly of the PSI subunits. This chain is Photosystem I assembly protein Ycf3, found in Arabidopsis thaliana (Mouse-ear cress).